The chain runs to 208 residues: Protein GrpE (208 aa).

Over residues 1 to 25 the composition is skewed to basic and acidic residues; sequence MVDNKDFNEELKENIQEELDNETKA. A disordered region spans residues 1–38; the sequence is MVDNKDFNEELKENIQEELDNETKAENPNIDEEVEEVS. Over residues 29–38 the composition is skewed to acidic residues; that stretch reads NIDEEVEEVS.

The protein belongs to the GrpE family. As to quaternary structure, homodimer.

It is found in the cytoplasm. Participates actively in the response to hyperosmotic and heat shock by preventing the aggregation of stress-denatured proteins, in association with DnaK and GrpE. It is the nucleotide exchange factor for DnaK and may function as a thermosensor. Unfolded proteins bind initially to DnaJ; upon interaction with the DnaJ-bound protein, DnaK hydrolyzes its bound ATP, resulting in the formation of a stable complex. GrpE releases ADP from DnaK; ATP binding to DnaK triggers the release of the substrate protein, thus completing the reaction cycle. Several rounds of ATP-dependent interactions between DnaJ, DnaK and GrpE are required for fully efficient folding. The protein is Protein GrpE of Clostridium perfringens (strain ATCC 13124 / DSM 756 / JCM 1290 / NCIMB 6125 / NCTC 8237 / Type A).